The sequence spans 511 residues: UDP-N-acetylmuramoyl-L-alanyl-D-glutamate--2,6-diaminopimelate ligase (511 aa).

Ser30 contributes to the UDP-N-acetyl-alpha-D-muramoyl-L-alanyl-D-glutamate binding site. Position 110 to 116 (110 to 116 (GTNGKTT)) interacts with ATP. UDP-N-acetyl-alpha-D-muramoyl-L-alanyl-D-glutamate-binding positions include 152-153 (TT), Ser179, Gln185, and Arg187. Lys219 carries the post-translational modification N6-carboxylysine. Meso-2,6-diaminopimelate-binding positions include Arg385, 409–412 (DNPR), Gly476, and Glu480. The Meso-diaminopimelate recognition motif motif lies at 409 to 412 (DNPR).

Belongs to the MurCDEF family. MurE subfamily. It depends on Mg(2+) as a cofactor. In terms of processing, carboxylation is probably crucial for Mg(2+) binding and, consequently, for the gamma-phosphate positioning of ATP.

The protein localises to the cytoplasm. The enzyme catalyses UDP-N-acetyl-alpha-D-muramoyl-L-alanyl-D-glutamate + meso-2,6-diaminopimelate + ATP = UDP-N-acetyl-alpha-D-muramoyl-L-alanyl-gamma-D-glutamyl-meso-2,6-diaminopimelate + ADP + phosphate + H(+). It functions in the pathway cell wall biogenesis; peptidoglycan biosynthesis. Functionally, catalyzes the addition of meso-diaminopimelic acid to the nucleotide precursor UDP-N-acetylmuramoyl-L-alanyl-D-glutamate (UMAG) in the biosynthesis of bacterial cell-wall peptidoglycan. This chain is UDP-N-acetylmuramoyl-L-alanyl-D-glutamate--2,6-diaminopimelate ligase, found in Geobacter metallireducens (strain ATCC 53774 / DSM 7210 / GS-15).